A 343-amino-acid polypeptide reads, in one-letter code: Methylthioribose-1-phosphate isomerase (343 aa).

Residues 48-50, Arg88, and Gln193 each bind substrate; that span reads RGA. The active-site Proton donor is Asp234. Residue 244 to 245 coordinates substrate; it reads NK.

This sequence belongs to the eIF-2B alpha/beta/delta subunits family. MtnA subfamily.

It carries out the reaction 5-(methylsulfanyl)-alpha-D-ribose 1-phosphate = 5-(methylsulfanyl)-D-ribulose 1-phosphate. It functions in the pathway amino-acid biosynthesis; L-methionine biosynthesis via salvage pathway; L-methionine from S-methyl-5-thio-alpha-D-ribose 1-phosphate: step 1/6. Catalyzes the interconversion of methylthioribose-1-phosphate (MTR-1-P) into methylthioribulose-1-phosphate (MTRu-1-P). This chain is Methylthioribose-1-phosphate isomerase, found in Thermotoga maritima (strain ATCC 43589 / DSM 3109 / JCM 10099 / NBRC 100826 / MSB8).